We begin with the raw amino-acid sequence, 262 residues long: 5'-nucleotidase SurE (262 aa).

Residues aspartate 8, aspartate 9, serine 40, and asparagine 92 each contribute to the a divalent metal cation site.

It belongs to the SurE nucleotidase family. A divalent metal cation is required as a cofactor.

The protein resides in the cytoplasm. The catalysed reaction is a ribonucleoside 5'-phosphate + H2O = a ribonucleoside + phosphate. Its function is as follows. Nucleotidase that shows phosphatase activity on nucleoside 5'-monophosphates. This is 5'-nucleotidase SurE from Xylella fastidiosa (strain M23).